Consider the following 534-residue polypeptide: Glycerophosphodiester transporter GIT2 (534 aa).

A run of 12 helical transmembrane segments spans residues 63-83, 96-116, 135-155, 163-183, 202-222, 230-250, 289-309, 322-342, 350-370, 377-397, 417-437, and 453-473; these read GAGLFADGYVNNSIGIVMACL, AISNIGSIGFVGTVVGQLSFG, LIAFTLLCAVGSWGTTIQGFF, FCLGVAIGAEYPTSSVIASEF, FMIDFGFVVSAFVPFVLLWIF, LWRVSIGLGAILPTALFFIRL, MIWFIYNFSVYSFGTFNAIIL, WGWSVVFNLFYIPGSFLGAFS, LTLAIGVGLQGIIGFIMSACL, VAAFTVVFGIFATLGEFGPGG, GIAAAMGKIGAFVGTWIFPAI, and VPFYLSSGLCIFSALLTFFLC.

The protein belongs to the major facilitator superfamily. Sugar transporter (TC 2.A.1.1) family.

Its subcellular location is the cell membrane. Its function is as follows. Probable glycerophosphodiester transporter. Does not possess detectable glycerophosphoinositol (GroPIns) transport activity. Might be involved in the uptake of glycerophosphocholine (GroPCho). The expanded ability to utilize GroPIns and GroPCho results from the organism's pathogenic nature and its need to occupy a variety of environments within its host organism. This possibility is buttressed by the fact that GroPIns and GroPCho are present and abundant in human fluids. This is Glycerophosphodiester transporter GIT2 from Candida albicans (strain SC5314 / ATCC MYA-2876) (Yeast).